The chain runs to 3010 residues: Genome polyprotein (3010 aa).

Residue Ser-2 is modified to N-acetylserine; by host. Residues 2–23 form an interaction with STAT1 region; sequence STNPKPQRKTKRNTNRRPQDVK. The segment at 2 to 58 is interaction with EIF2AK2/PKR; sequence STNPKPQRKTKRNTNRRPQDVKFPGGGQIVGGVYLLPRRGPRLGVRATRKTSERSQP. Residues 2–59 are interaction with DDX3X; that stretch reads STNPKPQRKTKRNTNRRPQDVKFPGGGQIVGGVYLLPRRGPRLGVRATRKTSERSQPR. Residues 2 to 75 are disordered; it reads STNPKPQRKT…PKARQPEGRA (74 aa). The Cytoplasmic portion of the chain corresponds to 2-168; sequence STNPKPQRKT…EDGVNYATGN (167 aa). Short sequence motifs (nuclear localization signal) lie at residues 5–13 and 38–43; these read PKPQRKTKR and PRRGPR. Over residues 7–16 the composition is skewed to basic residues; that stretch reads PQRKTKRNTN. Over residues 32–47 the composition is skewed to low complexity; sequence GGVYLLPRRGPRLGVR. Ser-53 carries the post-translational modification Phosphoserine; by host. Short sequence motifs (nuclear localization signal) lie at residues 58–64 and 66–71; these read PRGRRQP and PKARQP. The residue at position 99 (Ser-99) is a Phosphoserine; by host. Residues 112–152 are important for endoplasmic reticulum and mitochondrial localization; that stretch reads PRRRSRNLGKVIDTLTCGFADLMGYIPLVGAPLGGVARALA. Phosphoserine; by host PKA is present on Ser-116. The interval 122–173 is interaction with APOA2; that stretch reads VIDTLTCGFADLMGYIPLVGAPLGGVARALAHGVRVVEDGVNYATGNLPGCS. The tract at residues 164-167 is important for lipid droplets localization; sequence YATG. The chain crosses the membrane as a helical span at residues 169–189; sequence LPGCSFSIFLLALLSCLTIPA. Residues 178 to 191 constitute a propeptide, ER anchor for the core protein, removed in mature form by host signal peptidase; sequence LLALLSCLTIPASA. At 190-358 the chain is on the lumenal side; that stretch reads SAYEVRNVSG…AGAHWGVLAG (169 aa). Residues Asn-196, Asn-209, Asn-234, and Asn-250 are each glycosylated (N-linked (GlcNAc...) asparagine; by host). An important for fusion region spans residues 265 to 296; it reads LVGAAAFCSAMYVGDLCGSVFLVSQLFTFSPR. Asn-305 is a glycosylation site (N-linked (GlcNAc...) asparagine; by host). Residues 359–379 traverse the membrane as a helical segment; it reads LAYYSMVGNWAKVLIVMLLFA. Residues 380 to 725 are Lumenal-facing; that stretch reads GVDGETRVTG…WDYIVILFLL (346 aa). The tract at residues 385–411 is HVR1; that stretch reads TRVTGGQIARNAYSLTTLFSSGSAQNI. 4 N-linked (GlcNAc...) (high mannose) asparagine; by host glycosylation sites follow: Asn-417, Asn-423, Asn-430, and Asn-448. Cystine bridges form between Cys-429/Cys-552, Cys-452/Cys-459, Cys-486/Cys-494, and Cys-503/Cys-508. The segment at 474–479 is HVR2; the sequence is YAEQGG. Residues 480–493 are CD81-binding 1; the sequence is QDQRPYCWHYAPKP. A glycan (N-linked (GlcNAc...) (high mannose) asparagine; by host) is linked at Asn-532. Asn-540 carries N-linked (GlcNAc...) asparagine; by host glycosylation. The segment at 544–551 is CD81-binding 2; that stretch reads PPQGNWFG. N-linked (GlcNAc...) (high mannose) asparagine; by host glycosylation occurs at Asn-556. A disulfide bond links Cys-564 and Cys-569. Asn-576 carries an N-linked (GlcNAc...) (high mannose) asparagine; by host glycan. Cystine bridges form between Cys-581-Cys-585, Cys-597-Cys-620, and Cys-607-Cys-644. N-linked (GlcNAc...) (high mannose) asparagine; by host glycosylation is found at Asn-623 and Asn-645. Cysteines 652 and 677 form a disulfide. The tract at residues 660–671 is PKR/eIF2-alpha phosphorylation homology domain (PePHD); that stretch reads LELSPLLLSTTE. A helical transmembrane segment spans residues 726 to 746; sequence LADARVCACLWMMLLIAQAEA. Residues 747-757 are Lumenal-facing; sequence ALENLVVLNAA. Residues 758–778 traverse the membrane as a helical segment; the sequence is SVAGAHGILSFLVFFCAAWYI. Residues 779 to 781 are Cytoplasmic-facing; the sequence is KGK. Residues 782-803 traverse the membrane as a helical segment; it reads LVPGAAYAFYGVWPLLLLLLAL. Residues 804–813 are Lumenal-facing; the sequence is PPRAYAMERE. A helical transmembrane segment spans residues 814–834; that stretch reads MAASCGGAVFVGLVLLTLSPY. Residues 835-838 are Cytoplasmic-facing; it reads YKEF. The chain crosses the membrane as a helical span at residues 839–859; sequence LARLIWWLQYFITRAEAHLQV. Over 860–881 the chain is Lumenal; sequence WIPPLNIRGGRDAIILLACVVH. The helical transmembrane segment at 882–902 threads the bilayer; sequence PELIFDITKLLLAILGPLMVL. In terms of domain architecture, Peptidase C18 spans 903-1026; that stretch reads QASITQVPYF…SLEGQGWRLL (124 aa). At 903 to 1657 the chain is on the cytoplasmic side; the sequence is QASITQVPYF…CMSADLEVVT (755 aa). The interval 904 to 1206 is protease NS2-3; it reads ASITQVPYFV…PVESMETTMR (303 aa). Cys-922 carries S-palmitoyl cysteine; by host lipidation. The interaction with host SCPS1 stretch occupies residues 929-949; that stretch reads AGGHYVQMAFVKLTALTGTYV. Catalysis depends on for protease NS2 activity; shared with dimeric partner residues His-952, Glu-972, and Cys-993. The region spanning 1027-1208 is the Peptidase S29 domain; the sequence is APITAYSQQT…ESMETTMRSP (182 aa). Residues His-1083 and Asp-1107 each act as charge relay system; for serine protease NS3 activity in the active site. Zn(2+)-binding residues include Cys-1123 and Cys-1125. Ser-1165 acts as the Charge relay system; for serine protease NS3 activity in catalysis. Cys-1171 and His-1175 together coordinate Zn(2+). In terms of domain architecture, Helicase ATP-binding spans 1217–1369; it reads PAVPQTFQVA…PNIEEVALSN (153 aa). 1230-1237 contributes to the ATP binding site; that stretch reads APTGSGKS. Positions 1237 and 1317 each coordinate Mg(2+). The DECH box motif lies at 1316 to 1319; sequence DECH. Residues 1486–1497 are RNA-binding; the sequence is QRRGRTGRGRRG. A helical membrane pass occupies residues 1658-1678; it reads STWVLVGGVLAALAAYCLTTG. Residues 1679-1690 form an NS3-binding region; the sequence is SVVIVGRIILSG. Residues 1679–1805 are Cytoplasmic-facing; sequence SVVIVGRIIL…SITSPLSTQN (127 aa). Residues 1806–1824 traverse the membrane as a helical segment; the sequence is TLLFNIWGGWVAAQLAPPS. The Lumenal portion of the chain corresponds to 1825-1828; the sequence is AASA. Residues 1829-1849 traverse the membrane as a helical segment; the sequence is FVGAGIAGAAVGSIGLGKVLV. Asp-1850 is a topological domain (cytoplasmic). The helical transmembrane segment at 1851–1871 threads the bilayer; that stretch reads ILAGYGAGVAGALVAFKIMSG. The Lumenal portion of the chain corresponds to 1872-1881; the sequence is EVPSTEDLVN. Residues 1882–1902 traverse the membrane as a helical segment; it reads LLPAILSPGALVVGVVCAAIL. The Cytoplasmic segment spans residues 1903–1972; that stretch reads RRHVGPGEGA…WINEDCSTPC (70 aa). S-palmitoyl cysteine; by host attachment occurs at residues Cys-1968 and Cys-1972. Residues 1973 to 2002 lie within the membrane without spanning it; the sequence is SGSWLRDVWDWICTVLTDFKTWLQSKLLPR. Residues 2003–2989 are Cytoplasmic-facing; that stretch reads LPGVPFFSCQ…YHSLSRARPR (987 aa). Zn(2+) contacts are provided by Cys-2011, Cys-2029, Cys-2031, and Cys-2052. The FKBP8-binding stretch occupies residues 2120-2208; sequence EFFTEVDGVR…ASSSASQLSA (89 aa). Residues 2120–2332 are transcriptional activation; that stretch reads EFFTEVDGVR…PIPPPRRKRT (213 aa). The segment at 2135-2139 is interaction with non-structural protein 4A; that stretch reads PACKP. The tract at residues 2189–2441 is interaction with host SKP2; that stretch reads RLARGSPPSL…PCAAEESKLP (253 aa). Ser-2194 carries the post-translational modification Phosphoserine; by host; in p56. 5 positions are modified to phosphoserine; by host; in p58: Ser-2197, Ser-2201, Ser-2204, Ser-2207, and Ser-2210. The segment at 2210–2249 is ISDR; sequence SLKATCTTHHDSPDVDLIEANLLWRQEMGGNITRVESENK. Residues 2210 to 2275 form an interaction with EIF2AK2/PKR region; that stretch reads SLKATCTTHH…REPSVAAEIL (66 aa). The tract at residues 2249-2306 is NS4B-binding; it reads KVVILDSFDPLRAEEDEREPSVAAEILRKTKRFPPAMPIWARPDYNPPLLESWKDPDY. Residues 2322–2325 carry the SH3-binding motif; sequence PPIP. A Nuclear localization signal motif is present at residues 2326-2334; it reads PPRRKRTVV. Residue Lys-2350 forms a Glycyl lysine isopeptide (Lys-Gly) (interchain with G-Cter in ubiquitin) linkage. The segment covering 2351–2365 has biased composition (polar residues); it reads TFGSSGSSAVDSGTA. The interval 2351-2407 is disordered; it reads TFGSSGSSAVDSGTATAPPDQASDDGDQGSDVESYSSMPPLEGEPGDPDLSDGSWST. The tract at residues 2354–2377 is V3; sequence SSGSSAVDSGTATAPPDQASDDGD. Phosphoserine; by host is present on residues Ser-2448 and Ser-2461. Residues 2633 to 2751 form the RdRp catalytic domain; that stretch reads PMGFSYDTRC…ICESAGTQED (119 aa). Asp-2639, Asp-2737, and Asp-2738 together coordinate Mg(2+). The helical transmembrane segment at 2990–3010 threads the bilayer; sequence WFMLCLLLLSVGVGIYLLPNR.

It belongs to the hepacivirus polyprotein family. As to quaternary structure, homooligomer. Interacts with E1 (via C-terminus). Interacts with the non-structural protein 5A. Interacts (via N-terminus) with host STAT1 (via SH2 domain); this interaction results in decreased STAT1 phosphorylation and ubiquitin-mediated proteasome-dependent STAT1 degradation, leading to decreased IFN-stimulated gene transcription. Interacts with host STAT3; this interaction constitutively activates STAT3. Interacts with host LTBR receptor. Interacts with host TNFRSF1A receptor and possibly induces apoptosis. Interacts with host HNRPK. Interacts with host YWHAE. Interacts with host UBE3A/E6AP. Interacts with host DDX3X. Interacts with host APOA2. Interacts with host RXRA protein. Interacts with host SP110 isoform 3/Sp110b; this interaction sequesters the transcriptional corepressor SP110 away from the nucleus. Interacts with host CREB3 nuclear transcription protein; this interaction triggers cell transformation. Interacts with host ACY3. Interacts with host C1QR1. Interacts with host RBM24; this interaction, which enhances the interaction of the mature core protein with 5'-UTR, may inhibit viral translation and favor replication. Interacts with host EIF2AK2/PKR; this interaction induces the autophosphorylation of EIF2AK2. Part of the viral assembly initiation complex composed of NS2, E1, E2, NS3, NS4A, NS5A and the mature core protein. Forms a heterodimer with envelope glycoprotein E2. Interacts with mature core protein. Interacts with protease NS2. The heterodimer E1/E2 interacts with host CLDN1; this interaction plays a role in viral entry into host cell. Interacts with host SPSB2 (via C-terminus). Part of the viral assembly initiation complex composed of NS2, E1, E2, NS3, NS4A, NS5A and the mature core protein. Interacts with host NEURL3; this interaction prevents E1 binding to glycoprotein E2. In terms of assembly, forms a heterodimer with envelope glycoprotein E1. Interacts with host CD81 and SCARB1 receptors; these interactions play a role in viral entry into host cell. Interacts with host EIF2AK2/PKR; this interaction inhibits EIF2AK2 and probably allows the virus to evade the innate immune response. Interacts with host CD209/DC-SIGN and CLEC4M/DC-SIGNR. Interact with host SPCS1; this interaction is essential for viral particle assembly. Interacts with protease NS2. The heterodimer E1/E2 interacts with host CLDN1; this interaction plays a role in viral entry into host cell. Part of the viral assembly initiation complex composed of NS2, E1, E2, NS3, NS4A, NS5A and the mature core protein. Interacts with host SLC3A2/4F2hc; the interaction may facilitate viral entry into host cell. Interacts with human PLSCR1. As to quaternary structure, homohexamer. Homoheptamer. Interacts with protease NS2. Homodimer. Interacts with host SPCS1; this interaction is essential for viral particle assembly. Interacts with envelope glycoprotein E1. Interacts with envelope glycoprotein E2. Interacts with viroporin p7. Interacts with serine protease/helicase NS3. Part of the replication complex composed of NS2, NS3, NS4A, NS4B, NS5A and the RNA-directed RNA polymerase embedded in an ER-derived membranous web. Part of the viral assembly initiation complex composed of NS2, E1, E2, NS3, NS4A, NS5A and the mature core protein. In terms of assembly, interacts with protease NS2. Interacts with non-structural protein 4A; this interaction stabilizes the folding of NS3 serine protease. NS3-NS4A interaction is essential for NS3 activation and allows membrane anchorage of the latter. NS3/NS4A complex also prevents phosphorylation of host IRF3, thus preventing the establishment of dsRNA induced antiviral state. Interacts with host MAVS; this interaction leads to the cleavage and inhibition of host MAVS. Interacts with host TICAM1; this interaction leads to the cleavage and inhibition of host TICAM1. Interacts with host TANK-binding kinase/TBK1; this interaction results in the inhibition of the association between TBK1 and IRF3, which leads to the inhibition of IRF3 activation. Interacts with host RBM24. Part of the replication complex composed of NS2, NS3, NS4A, NS4B, NS5A and the RNA-directed RNA polymerase embedded in an ER-derived membranous web. Part of the viral assembly initiation complex composed of NS2, E1, E2, NS3, NS4A, NS5A and the mature core protein. As to quaternary structure, interacts with NS3 serine protease; this interaction stabilizes the folding of NS3 serine protease. NS3-NS4A interaction is essential for NS3 activation and allows membrane anchorage of the latter. Interacts with non-structural protein 5A (via N-terminus). Part of the replication complex composed of NS2, NS3, NS4A, NS4B, NS5A and the RNA-directed RNA polymerase embedded in an ER-derived membranous web. Part of the viral assembly initiation complex composed of NS2, E1, E2, NS3, NS4A, NS5A and the mature core protein. Homomultimer. Interacts with non-structural protein NS5A. Interacts with host PLA2G4C; this interaction likely initiates the recruitment of replication complexes to lipid droplets. Interacts with host STING; this interaction disrupts the interaction between STING and TBK1 thereby suppressing the interferon signaling. Part of the replication complex composed of NS2, NS3, NS4A, NS4B, NS5A and the RNA-directed RNA polymerase embedded in an ER-derived membranous web. In terms of assembly, monomer. Homodimer; dimerization is required for RNA-binding. Interacts with the mature core protein. Interacts (via N-terminus) with non-structural protein 4A. Interacts with non-structural protein 4B. Interacts (via region D2) with RNA-directed RNA polymerase. Part of the viral assembly initiation complex composed of NS2, E1, E2, NS3, NS4A, NS5A and the mature core protein. Part of the replication complex composed of NS2, NS3, NS4A, NS4B, NS5A and the RNA-directed RNA polymerase embedded in an ER-derived membranous web. Interacts with host GRB2. Interacts with host BIN1. Interacts with host PIK3R1. Interacts with host SRCAP. Interacts with host FKBP8. Interacts (via C-terminus) with host VAPB (via MSP domain). Interacts with host EIF2AK2/PKR; this interaction leads to disruption of EIF2AK2 dimerization by NS5A and probably allows the virus to evade the innate immune response. Interacts (via N-terminus) with host PACSIN2 (via N-terminus); this interaction attenuates protein kinase C alpha-mediated phosphorylation of PACSIN2 by disrupting the interaction between PACSIN2 and PRKCA. Interacts (via N-terminus) with host SRC kinase (via SH2 domain). Interacts with most Src-family kinases. Interacts with host IFI27 and SKP2; promotes the ubiquitin-mediated proteasomal degradation of NS5A. Interacts with host GPS2. Interacts with host TNFRSF21; this interaction allows the modulation by the virus of JNK, p38 MAPK, STAT3, and Akt signaling pathways in a DR6-dependent manner. Interacts (via N-terminus) with host CIDEB (via N-terminus); this interaction seems to regulate the association of HCV particles with APOE. Interacts with host CHKA/Choline Kinase-alpha; CHKA bridges host PI4KA and NS5A and potentiates NS5A-stimulated PI4KA activity, which then facilitates the targeting of the ternary complex to the ER for viral replication. Interacts with host SPSB2 (via C-terminus); this interaction targets NS5A for ubiquitination and degradation. Interacts with host RAB18; this interaction may promote the association of NS5A and other replicase components with lipid droplets. Interacts (via region D2) with host PPIA/CYPA; the interaction stimulates RNA-binding ability of NS5A and is dependent on the peptidyl-prolyl cis-trans isomerase activity of PPIA/CYPA. Interacts with host TRIM14; this interaction induces the degradation of NS5A. As to quaternary structure, homooligomer. Interacts with non-structural protein 5A. Interacts with host VAPB. Interacts with host PRK2/PKN2. Interacts with host HNRNPA1 and SEPT6; these interactions facilitate viral replication. Part of the replication complex composed of NS2, NS3, NS4A, NS4B, NS5A and the RNA-directed RNA polymerase. The cofactor is Zn(2+). Requires Mg(2+) as cofactor. Specific enzymatic cleavages in vivo yield mature proteins. The structural proteins, core, E1, E2 and p7 are produced by proteolytic processing by host signal peptidases. The core protein precursor is synthesized as a 23 kDa, which is retained in the ER membrane through the hydrophobic signal peptide. Cleavage by the signal peptidase releases the 21 kDa mature core protein. The cleavage of the core protein precursor occurs between aminoacids 176 and 188 but the exact cleavage site is not known. Some degraded forms of the core protein appear as well during the course of infection. The other proteins (p7, NS2, NS3, NS4A, NS4B, NS5A and NS5B) are cleaved by the viral proteases. Autoprocessing between NS2 and NS3 is mediated by the NS2 cysteine protease catalytic domain and regulated by the NS3 N-terminal domain. Post-translationally, phosphorylated by host PKC and PKA. In terms of processing, ubiquitinated; mediated by UBE3A and leading to core protein subsequent proteasomal degradation. Highly N-glycosylated. Post-translationally, palmitoylation is required for NS2/3 autoprocessing and E2 recruitment to membranes. In terms of processing, palmitoylated. This modification may play a role in its polymerization or in protein-protein interactions. Phosphorylated on serines in a basal form termed p56. p58 is a hyperphosphorylated form of p56. p56 and p58 coexist in the cell in roughly equivalent amounts. Hyperphosphorylation is dependent on the presence of NS4A. Host CSNK1A1/CKI-alpha or RPS6KB1 kinases may be responsible for NS5A phosphorylation. Post-translationally, tyrosine phosphorylation is essential for the interaction with host SRC. In terms of processing, ubiquitinated. Ubiquitination, most probably at Lys-2350, mediated by host IFI27 and SKP2 leads to proteasomal degradation, restricting viral infection. Ubiquitination by host TRIM22 leads to interruption of viral replication. The N-terminus is phosphorylated by host PRK2/PKN2.

Its subcellular location is the host endoplasmic reticulum membrane. It is found in the host mitochondrion membrane. The protein localises to the virion. The protein resides in the host cytoplasm. It localises to the host nucleus. Its subcellular location is the host lipid droplet. It is found in the virion membrane. The protein localises to the host mitochondrion. The protein resides in the host cell membrane. It localises to the host perinuclear region. It catalyses the reaction Hydrolysis of four peptide bonds in the viral precursor polyprotein, commonly with Asp or Glu in the P6 position, Cys or Thr in P1 and Ser or Ala in P1'.. The enzyme catalyses a ribonucleoside 5'-triphosphate + H2O = a ribonucleoside 5'-diphosphate + phosphate + H(+). It carries out the reaction ATP + H2O = ADP + phosphate + H(+). The catalysed reaction is RNA(n) + a ribonucleoside 5'-triphosphate = RNA(n+1) + diphosphate. Its activity is regulated as follows. Inhibited by the antiviral drug hexamethylene amiloride. Inhibition by amantadine appears to be genotype-dependent. Also inhibited by long-alkyl-chain iminosugar derivatives. Activity is up-regulated by PRK2/PKN2-mediated phosphorylation. In terms of biological role, packages viral RNA to form a viral nucleocapsid, and promotes virion budding. Participates in the viral particle production as a result of its interaction with the non-structural protein 5A. Binds RNA and may function as a RNA chaperone to induce the RNA structural rearrangements taking place during virus replication. Modulates viral translation initiation by interacting with viral IRES and 40S ribosomal subunit. Affects various cell signaling pathways, host immunity and lipid metabolism. Prevents the establishment of cellular antiviral state by blocking the interferon-alpha/beta (IFN-alpha/beta) and IFN-gamma signaling pathways and by blocking the formation of phosphorylated STAT1 and promoting ubiquitin-mediated proteasome-dependent degradation of STAT1. Activates STAT3 leading to cellular transformation. Regulates the activity of cellular genes, including c-myc and c-fos. May repress the promoter of p53, and sequester CREB3 and SP110 isoform 3/Sp110b in the cytoplasm. Represses cell cycle negative regulating factor CDKN1A, thereby interrupting an important check point of normal cell cycle regulation. Targets transcription factors involved in the regulation of inflammatory responses and in the immune response: suppresses TNF-induced NF-kappa-B activation, and activates AP-1. Binds to dendritic cells (DCs) via C1QR1, resulting in down-regulation of T-lymphocytes proliferation. Alters lipid metabolism by interacting with hepatocellular proteins involved in lipid accumulation and storage. Induces up-regulation of FAS promoter activity, and thereby contributes to the increased triglyceride accumulation in hepatocytes (steatosis). Forms a heterodimer with envelope glycoprotein E2, which mediates virus attachment to the host cell, virion internalization through clathrin-dependent endocytosis and fusion with host membrane. Fusion with the host cell is most likely mediated by both E1 and E2, through conformational rearrangements of the heterodimer required for fusion rather than a classical class II fusion mechanism. E1/E2 heterodimer binds host apolipoproteins such as APOB and APOE thereby forming a lipo-viro-particle (LVP). APOE associated to the LVP allows the initial virus attachment to cell surface receptors such as the heparan sulfate proteoglycans (HSPGs), syndecan-1 (SDC1), syndecan-1 (SDC2), the low-density lipoprotein receptor (LDLR) and scavenger receptor class B type I (SCARB1). The cholesterol transfer activity of SCARB1 allows E2 exposure and binding of E2 to SCARB1 and the tetraspanin CD81. E1/E2 heterodimer binding on CD81 activates the epithelial growth factor receptor (EGFR) signaling pathway. Diffusion of the complex E1-E2-EGFR-SCARB1-CD81 to the cell lateral membrane allows further interaction with Claudin 1 (CLDN1) and occludin (OCLN) to finally trigger HCV entry. Its function is as follows. Forms a heterodimer with envelope glycoprotein E1, which mediates virus attachment to the host cell, virion internalization through clathrin-dependent endocytosis and fusion with host membrane. Fusion with the host cell is most likely mediated by both E1 and E2, through conformational rearrangements of the heterodimer required for fusion rather than a classical class II fusion mechanism. The interaction between envelope glycoprotein E2 and host apolipoprotein E/APOE allows the proper assembly, maturation and infectivity of the viral particles. This interaction is probably promoted via the up-regulation of cellular autophagy by the virus. E1/E2 heterodimer binds host apolipoproteins such as APOB and APOE thereby forming a lipo-viro-particle (LVP). APOE associated to the LVP allows the initial virus attachment to cell surface receptors such as the heparan sulfate proteoglycans (HSPGs), syndecan-1 (SDC1), syndecan-1 (SDC2), the low-density lipoprotein receptor (LDLR) and scavenger receptor class B type I (SCARB1). The cholesterol transfer activity of SCARB1 allows E2 exposure and binding of E2 to SCARB1 and the tetraspanin CD81. E1/E2 heterodimer binding on CD81 activates the epithelial growth factor receptor (EGFR) signaling pathway. Diffusion of the complex E1-E2-EGFR-SCARB1-CD81 to the cell lateral membrane allows further interaction with Claudin 1 (CLDN1) and occludin (OCLN) to finally trigger HCV entry. Inhibits host EIF2AK2/PKR activation, preventing the establishment of an antiviral state. Viral ligand for CD209/DC-SIGN and CLEC4M/DC-SIGNR, which are respectively found on dendritic cells (DCs), and on liver sinusoidal endothelial cells and macrophage-like cells of lymph node sinuses. These interactions allow the capture of circulating HCV particles by these cells and subsequent facilitated transmission to permissive cells such as hepatocytes and lymphocyte subpopulations. The interaction between E2 and host amino acid transporter complex formed by SLC3A2 and SLC7A5/LAT1 may facilitate viral entry into host cell. Functionally, ion channel protein that acts as a viroporin and plays an essential role in the assembly, envelopment and secretion of viral particles. Regulates the host cell secretory pathway, which induces the intracellular retention of viral glycoproteins and favors assembly of viral particles. Creates a pore in acidic organelles and releases Ca(2+) and H(+) in the cytoplasm of infected cells, leading to a productive viral infection. High levels of cytoplasmic Ca(2+) may trigger membrane trafficking and transport of viral ER-associated proteins to viroplasms, sites of viral genome replication. This ionic imbalance induces the assembly of the inflammasome complex, which triggers the maturation of pro-IL-1beta into IL-1beta through the action of caspase-1. Targets also host mitochondria and induces mitochondrial depolarization. In addition of its role as a viroporin, acts as a lipid raft adhesion factor. In terms of biological role, cysteine protease required for the proteolytic auto-cleavage between the non-structural proteins NS2 and NS3. The N-terminus of NS3 is required for the function of NS2 protease (active region NS2-3). Promotes the initiation of viral particle assembly by mediating the interaction between structural and non-structural proteins. Displays three enzymatic activities: serine protease with a chymotrypsin-like fold, NTPase and RNA helicase. NS3 serine protease, in association with NS4A, is responsible for the cleavages of NS3-NS4A, NS4A-NS4B, NS4B-NS5A and NS5A-NS5B. The NS3/NS4A complex prevents phosphorylation of host IRF3, thus preventing the establishment of dsRNA induced antiviral state. The NS3/NS4A complex induces host amino acid transporter component SLC3A2, thus contributing to HCV propagation. NS3 RNA helicase binds to RNA and unwinds both dsDNA and dsRNA in the 3' to 5' direction, and likely resolves RNA complicated stable secondary structures in the template strand. Binds a single ATP and catalyzes the unzipping of a single base pair of dsRNA. Inhibits host antiviral proteins TBK1 and IRF3 thereby preventing the establishment of an antiviral state. Cleaves host MAVS/CARDIF thereby preventing the establishment of an antiviral state. Cleaves host TICAM1/TRIF, thereby disrupting TLR3 signaling and preventing the establishment of an antiviral state. Its function is as follows. Peptide cofactor which forms a non-covalent complex with the N-terminal of NS3 serine protease. The NS3/NS4A complex prevents phosphorylation of host IRF3, thus preventing the establishment of dsRNA induced antiviral state. The NS3/NS4A complex induces host amino acid transporter component SLC3A2, thus contributing to HCV propagation. Functionally, induces a specific membrane alteration that serves as a scaffold for the virus replication complex. This membrane alteration gives rise to the so-called ER-derived membranous web that contains the replication complex. NS4B self-interaction contributes to its function in membranous web formation. Promotes host TRIF protein degradation in a CASP8-dependent manner thereby inhibiting host TLR3-mediated interferon signaling. Disrupts the interaction between STING and TBK1 contributing to the inhibition of interferon signaling. In terms of biological role, phosphorylated protein that is indispensable for viral replication and assembly. Both hypo- and hyperphosphorylated states are required for the viral life cycle. The hyperphosphorylated form of NS5A is an inhibitor of viral replication. Involved in RNA-binding and especially in binding to the viral genome. Zinc is essential for RNA-binding. Participates in the viral particle production as a result of its interaction with the mature viral core protein. Its interaction with host VAPB may target the viral replication complex to vesicles. Down-regulates viral IRES translation initiation. Mediates interferon resistance, presumably by interacting with and inhibiting host EIF2AK2/PKR. Prevents BIN1-induced apoptosis. Acts as a transcriptional activator of some host genes important for viral replication when localized in the nucleus. Via the interaction with host PACSIN2, modulates lipid droplet formation in order to promote virion assembly. Modulates TNFRSF21/DR6 signaling pathway for viral propagation. RNA-dependent RNA polymerase that performs primer-template recognition and RNA synthesis during viral replication. Initiates RNA transcription/replication at a flavin adenine dinucleotide (FAD), resulting in a 5'- FAD cap on viral RNAs. In this way, recognition of viral 5' RNA by host pattern recognition receptors can be bypassed, thereby evading activation of antiviral pathways. This is Genome polyprotein from Homo sapiens (Human).